Reading from the N-terminus, the 289-residue chain is Protease HtpX (289 aa).

2 consecutive transmembrane segments (helical) span residues 6–26 (ILFL…LNII) and 38–58 (TGIL…SLFM). Position 144 (His144) interacts with Zn(2+). The active site involves Glu145. Residue His148 coordinates Zn(2+). The next 2 membrane-spanning stretches (helical) occupy residues 152-172 (GDMV…IFLS) and 194-214 (LVFW…ATMI). Glu223 is a binding site for Zn(2+).

This sequence belongs to the peptidase M48B family. Zn(2+) serves as cofactor.

The protein resides in the cell inner membrane. The sequence is that of Protease HtpX from Haemophilus ducreyi (strain 35000HP / ATCC 700724).